The sequence spans 249 residues: 5'-nucleotidase SurE (249 aa).

4 residues coordinate a divalent metal cation: Asp-8, Asp-9, Ser-39, and Asn-91.

The protein belongs to the SurE nucleotidase family. A divalent metal cation serves as cofactor.

It localises to the cytoplasm. It catalyses the reaction a ribonucleoside 5'-phosphate + H2O = a ribonucleoside + phosphate. In terms of biological role, nucleotidase that shows phosphatase activity on nucleoside 5'-monophosphates. This chain is 5'-nucleotidase SurE, found in Pseudomonas putida (strain ATCC 700007 / DSM 6899 / JCM 31910 / BCRC 17059 / LMG 24140 / F1).